The chain runs to 222 residues: UPF0758 protein YicR (222 aa).

Residues 100 to 222 (PLLSPEMTRE…YVSFAERGWI (123 aa)) enclose the MPN domain. Residues H171, H173, and D184 each contribute to the Zn(2+) site. A JAMM motif motif is present at residues 171–184 (HNHPSGCAEPSKAD).

The protein belongs to the UPF0758 family. YicR subfamily.

This chain is UPF0758 protein YicR, found in Escherichia coli (strain K12 / MC4100 / BW2952).